We begin with the raw amino-acid sequence, 241 residues long: Phosphoribosylaminoimidazole-succinocarboxamide synthase (241 aa).

Belongs to the SAICAR synthetase family.

It carries out the reaction 5-amino-1-(5-phospho-D-ribosyl)imidazole-4-carboxylate + L-aspartate + ATP = (2S)-2-[5-amino-1-(5-phospho-beta-D-ribosyl)imidazole-4-carboxamido]succinate + ADP + phosphate + 2 H(+). It participates in purine metabolism; IMP biosynthesis via de novo pathway; 5-amino-1-(5-phospho-D-ribosyl)imidazole-4-carboxamide from 5-amino-1-(5-phospho-D-ribosyl)imidazole-4-carboxylate: step 1/2. This Deinococcus geothermalis (strain DSM 11300 / CIP 105573 / AG-3a) protein is Phosphoribosylaminoimidazole-succinocarboxamide synthase.